The sequence spans 511 residues: 2-isopropylmalate synthase (511 aa).

The 264-residue stretch at I6–F269 folds into the Pyruvate carboxyltransferase domain. Positions 15, 203, 205, and 239 each coordinate Mn(2+). Residues V394 to A511 form a regulatory domain region.

It belongs to the alpha-IPM synthase/homocitrate synthase family. LeuA type 1 subfamily. Homodimer. The cofactor is Mn(2+).

It is found in the cytoplasm. It carries out the reaction 3-methyl-2-oxobutanoate + acetyl-CoA + H2O = (2S)-2-isopropylmalate + CoA + H(+). Its pathway is amino-acid biosynthesis; L-leucine biosynthesis; L-leucine from 3-methyl-2-oxobutanoate: step 1/4. In terms of biological role, catalyzes the condensation of the acetyl group of acetyl-CoA with 3-methyl-2-oxobutanoate (2-ketoisovalerate) to form 3-carboxy-3-hydroxy-4-methylpentanoate (2-isopropylmalate). The polypeptide is 2-isopropylmalate synthase (Campylobacter jejuni subsp. jejuni serotype O:2 (strain ATCC 700819 / NCTC 11168)).